The primary structure comprises 363 residues: MQEDDSVKPFQTVGAHRDLIHCVSFDPHGRRMATCASDMTMAIWDRKPDGNWRRSAHWKCHGGAVWRVIWAHPEFGQIVATCSYDRTIVIWEEQIVRSEKDLKQKESQWIRRTIISDNRSDVTDICFSPRHLGLMMASCNVLGTVRIYEAPDIVDASRWNLIHELQAFHTRCGCVTWSLSRMHRPLIAVGSDEKKAENKKRVVIYENIDGLRKWQRINSLVFDLPCPITDLKFSPISMVDSHQLAVASGDVHVYNIKVARSAILEEDGVENPIQLADYNLIKVALLGDHRKAWRLRYNLMGSVISSTSLDGTLRSWKSLFVNQWVKLSEMNVDDYVPSPEEVRAFISSKTTERLPSQLEKTYF.

6 WD repeats span residues Ala-15 to Arg-54, Cys-60 to Asp-101, Gln-108 to Glu-149, Arg-158 to Glu-206, Asp-223 to Leu-264, and Gly-287 to Lys-326.

Belongs to the WD repeat SEC13 family. As to quaternary structure, component of the nuclear pore complex (NPC). Probably part of the GATOR complex.

The protein localises to the nucleus. It is found in the nuclear pore complex. It localises to the lysosome membrane. Its subcellular location is the nucleus envelope. Its function is as follows. Probable component of the nuclear pore complex (NPC) which is involved in the trafficking of macromolecules between the cytoplasm and nucleus. In terms of biological role, as a component of the GATOR complex may function in the amino acid-sensing branch of the TORC1 signaling pathway. In Caenorhabditis elegans, this protein is Nucleoporin SEH1.